Consider the following 255-residue polypeptide: Hydroxyacylglutathione hydrolase (255 aa).

Zn(2+)-binding residues include histidine 53, histidine 55, aspartate 57, histidine 58, histidine 110, aspartate 127, and histidine 165.

This sequence belongs to the metallo-beta-lactamase superfamily. Glyoxalase II family. As to quaternary structure, monomer. It depends on Zn(2+) as a cofactor.

It catalyses the reaction an S-(2-hydroxyacyl)glutathione + H2O = a 2-hydroxy carboxylate + glutathione + H(+). The protein operates within secondary metabolite metabolism; methylglyoxal degradation; (R)-lactate from methylglyoxal: step 2/2. Thiolesterase that catalyzes the hydrolysis of S-D-lactoyl-glutathione to form glutathione and D-lactic acid. This chain is Hydroxyacylglutathione hydrolase, found in Xanthomonas axonopodis pv. citri (strain 306).